The sequence spans 285 residues: Inositol polyphosphate 1-phosphatase (285 aa).

Residues Glu-68, Asp-106, Leu-108, and Asp-109 each contribute to the Mg(2+) site. Positions 109, 110, 111, 173, 195, 197, and 200 each coordinate 1D-myo-inositol 1,4-bisphosphate. Asp-223 is a Mg(2+) binding site.

Belongs to the inositol monophosphatase superfamily. As to quaternary structure, monomer. It depends on Mg(2+) as a cofactor.

The protein resides in the cytoplasm. It carries out the reaction 1D-myo-inositol 1,4-bisphosphate + H2O = 1D-myo-inositol 4-phosphate + phosphate. The catalysed reaction is adenosine 3',5'-bisphosphate + H2O = AMP + phosphate. With respect to regulation, partially inhibited by Li(2+). In terms of biological role, catalyzes the hydrolysis of the 1-position phosphate from inositol 1,4-bisphosphate. Is also able to convert 3'(2')-phosphoadenosine 5'-phosphate (PAP) to AMP but with less efficiency. The protein is Inositol polyphosphate 1-phosphatase of Entamoeba histolytica (strain ATCC 30459 / HM-1:IMSS / ABRM).